A 477-amino-acid polypeptide reads, in one-letter code: Glycogen synthase (477 aa).

Position 15 (Lys-15) interacts with ADP-alpha-D-glucose.

This sequence belongs to the glycosyltransferase 1 family. Bacterial/plant glycogen synthase subfamily.

The enzyme catalyses [(1-&gt;4)-alpha-D-glucosyl](n) + ADP-alpha-D-glucose = [(1-&gt;4)-alpha-D-glucosyl](n+1) + ADP + H(+). It functions in the pathway glycan biosynthesis; glycogen biosynthesis. Its function is as follows. Synthesizes alpha-1,4-glucan chains using ADP-glucose. The sequence is that of Glycogen synthase from Caldicellulosiruptor saccharolyticus (strain ATCC 43494 / DSM 8903 / Tp8T 6331).